The sequence spans 95 residues: DNA-directed RNA polymerase subunit Rpo11 (95 aa).

It belongs to the archaeal Rpo11/eukaryotic RPB11/RPC19 RNA polymerase subunit family. Part of the RNA polymerase complex.

The protein resides in the cytoplasm. It catalyses the reaction RNA(n) + a ribonucleoside 5'-triphosphate = RNA(n+1) + diphosphate. Its function is as follows. DNA-dependent RNA polymerase (RNAP) catalyzes the transcription of DNA into RNA using the four ribonucleoside triphosphates as substrates. This is DNA-directed RNA polymerase subunit Rpo11 from Pyrococcus horikoshii (strain ATCC 700860 / DSM 12428 / JCM 9974 / NBRC 100139 / OT-3).